The sequence spans 488 residues: Glutamate synthase [NADPH] small chain (488 aa).

In terms of domain architecture, 4Fe-4S ferredoxin-type spans 38-69; the sequence is ESLRQQATRCMDCGIPFCHNGCPLGNLIPEWN.

[4Fe-4S] cluster serves as cofactor.

The enzyme catalyses 2 L-glutamate + NADP(+) = L-glutamine + 2-oxoglutarate + NADPH + H(+). It participates in amino-acid biosynthesis; L-glutamate biosynthesis via GLT pathway; L-glutamate from 2-oxoglutarate and L-glutamine (NADP(+) route): step 1/1. This Mycobacterium tuberculosis (strain CDC 1551 / Oshkosh) protein is Glutamate synthase [NADPH] small chain (gltD).